A 358-amino-acid polypeptide reads, in one-letter code: Methylthioribose-1-phosphate isomerase (358 aa).

Residues 54–56, arginine 96, and glutamine 205 contribute to the substrate site; that span reads RGA. The active-site Proton donor is the aspartate 246. 256–257 provides a ligand contact to substrate; that stretch reads NK.

It belongs to the eIF-2B alpha/beta/delta subunits family. MtnA subfamily.

It catalyses the reaction 5-(methylsulfanyl)-alpha-D-ribose 1-phosphate = 5-(methylsulfanyl)-D-ribulose 1-phosphate. It participates in amino-acid biosynthesis; L-methionine biosynthesis via salvage pathway; L-methionine from S-methyl-5-thio-alpha-D-ribose 1-phosphate: step 1/6. In terms of biological role, catalyzes the interconversion of methylthioribose-1-phosphate (MTR-1-P) into methylthioribulose-1-phosphate (MTRu-1-P). The chain is Methylthioribose-1-phosphate isomerase from Pseudomonas savastanoi pv. phaseolicola (strain 1448A / Race 6) (Pseudomonas syringae pv. phaseolicola (strain 1448A / Race 6)).